A 390-amino-acid polypeptide reads, in one-letter code: Na(+)/H(+) antiporter NhaA 1 (390 aa).

11 consecutive transmembrane segments (helical) span residues 14-34, 59-79, 94-114, 125-145, 154-174, 179-199, 205-225, 260-280, 295-315, 328-348, and 362-382; these read SGIL…NGVL, TILW…GLEL, VALP…IFYV, GWAI…FLLG, LFLL…IAIF, LSII…ILNY, IYIY…SGIH, PIVA…VVFS, IIFG…FLAI, WLHL…SLFI, and ANKI…YFVL.

The protein belongs to the NhaA Na(+)/H(+) (TC 2.A.33) antiporter family.

The protein resides in the cell inner membrane. The catalysed reaction is Na(+)(in) + 2 H(+)(out) = Na(+)(out) + 2 H(+)(in). Its function is as follows. Na(+)/H(+) antiporter that extrudes sodium in exchange for external protons. The chain is Na(+)/H(+) antiporter NhaA 1 from Campylobacter fetus subsp. fetus (strain 82-40).